A 425-amino-acid chain; its full sequence is Serine--tRNA ligase (425 aa).

230–232 (TAE) lines the L-serine pocket. 261-263 (RSE) serves as a coordination point for ATP. Residue E284 participates in L-serine binding. 348–351 (EISS) is an ATP binding site. L-serine is bound at residue S384.

It belongs to the class-II aminoacyl-tRNA synthetase family. Type-1 seryl-tRNA synthetase subfamily. In terms of assembly, homodimer. The tRNA molecule binds across the dimer.

The protein localises to the cytoplasm. The enzyme catalyses tRNA(Ser) + L-serine + ATP = L-seryl-tRNA(Ser) + AMP + diphosphate + H(+). The catalysed reaction is tRNA(Sec) + L-serine + ATP = L-seryl-tRNA(Sec) + AMP + diphosphate + H(+). It functions in the pathway aminoacyl-tRNA biosynthesis; selenocysteinyl-tRNA(Sec) biosynthesis; L-seryl-tRNA(Sec) from L-serine and tRNA(Sec): step 1/1. Its function is as follows. Catalyzes the attachment of serine to tRNA(Ser). Is also able to aminoacylate tRNA(Sec) with serine, to form the misacylated tRNA L-seryl-tRNA(Sec), which will be further converted into selenocysteinyl-tRNA(Sec). The polypeptide is Serine--tRNA ligase (Streptococcus pyogenes serotype M1).